Here is a 438-residue protein sequence, read N- to C-terminus: Trigger factor (438 aa).

The PPIase FKBP-type domain occupies 162 to 247 (GDIVTIDFEG…VKEIKVKELP (86 aa)).

Belongs to the FKBP-type PPIase family. Tig subfamily.

It is found in the cytoplasm. The enzyme catalyses [protein]-peptidylproline (omega=180) = [protein]-peptidylproline (omega=0). Its function is as follows. Involved in protein export. Acts as a chaperone by maintaining the newly synthesized protein in an open conformation. Functions as a peptidyl-prolyl cis-trans isomerase. The sequence is that of Trigger factor from Caldicellulosiruptor saccharolyticus (strain ATCC 43494 / DSM 8903 / Tp8T 6331).